A 476-amino-acid chain; its full sequence is Ribosomal RNA small subunit methyltransferase F (476 aa).

Residues Ala124 to Lys130, Glu148, Asp175, and Asp193 contribute to the S-adenosyl-L-methionine site. The Nucleophile role is filled by Cys246.

It belongs to the class I-like SAM-binding methyltransferase superfamily. RsmB/NOP family.

Its subcellular location is the cytoplasm. The enzyme catalyses cytidine(1407) in 16S rRNA + S-adenosyl-L-methionine = 5-methylcytidine(1407) in 16S rRNA + S-adenosyl-L-homocysteine + H(+). Its function is as follows. Specifically methylates the cytosine at position 1407 (m5C1407) of 16S rRNA. This is Ribosomal RNA small subunit methyltransferase F from Photobacterium profundum (strain SS9).